Consider the following 173-residue polypeptide: 5-hydroxymethyl-dUMP N-hydrolase (173 aa).

N-acetylalanine is present on Ala2. A 5-hydroxymethyl-dUMP-binding site is contributed by Gly16. Ser17 is subject to Phosphoserine. 5-hydroxymethyl-dUMP is bound by residues Ile18, Arg19, Gly20, Ser87, Gly89, and Glu93. The residue at position 87 (Ser87) is a Phosphoserine. 4 positions are modified to phosphoserine: Ser112, Ser117, Ser127, and Ser158. 5-hydroxymethyl-dUMP is bound at residue Ser117.

The protein belongs to the 2'-deoxynucleoside 5'-phosphate N-hydrolase 1 family. In terms of assembly, monomer and homodimer.

It localises to the cytoplasm. It is found in the nucleus. The enzyme catalyses 5-hydroxymethyl-dUMP + H2O = 5-hydroxymethyluracil + 2-deoxy-D-ribose 5-phosphate. Its function is as follows. Part of a nucleotide salvage pathway that eliminates epigenetically modified 5-hydroxymethyl-dCMP (hmdCMP) in a two-step process entailing deamination to cytotoxic 5-hydroxymethyl-dUMP (hmdUMP), followed by its hydrolysis into 5-hydroxymethyluracil (hmU) and 2-deoxy-D-ribose 5-phosphate (deoxyribosephosphate). Catalyzes the second step in that pathway, the hydrolysis of the N-glycosidic bond in hmdUMP, degrading this cytotoxic nucleotide to avoid its genomic integration. The polypeptide is 5-hydroxymethyl-dUMP N-hydrolase (Mus musculus (Mouse)).